The chain runs to 92 residues: Sugar fermentation stimulation protein B (92 aa).

A DNA-binding region (H-T-H motif) is located at residues 50–69 (EMIIAKALGTDPWVIWPSRY).

Belongs to the ner transcriptional regulatory family.

Its function is as follows. This protein is involved in positive regulation of the metabolism of sugars. This chain is Sugar fermentation stimulation protein B (sfsB), found in Escherichia coli O157:H7.